We begin with the raw amino-acid sequence, 244 residues long: Type III pantothenate kinase (244 aa).

8–15 (DQGNSACK) provides a ligand contact to ATP. 94 to 97 (GADR) provides a ligand contact to substrate. Aspartate 96 serves as the catalytic Proton acceptor. Aspartate 117 serves as a coordination point for K(+). Threonine 120 serves as a coordination point for ATP. Residue threonine 175 coordinates substrate.

Belongs to the type III pantothenate kinase family. As to quaternary structure, homodimer. It depends on NH4(+) as a cofactor. Requires K(+) as cofactor.

Its subcellular location is the cytoplasm. It carries out the reaction (R)-pantothenate + ATP = (R)-4'-phosphopantothenate + ADP + H(+). It functions in the pathway cofactor biosynthesis; coenzyme A biosynthesis; CoA from (R)-pantothenate: step 1/5. Catalyzes the phosphorylation of pantothenate (Pan), the first step in CoA biosynthesis. This is Type III pantothenate kinase from Porphyromonas gingivalis (strain ATCC 33277 / DSM 20709 / CIP 103683 / JCM 12257 / NCTC 11834 / 2561).